A 379-amino-acid polypeptide reads, in one-letter code: Mating-type protein MAT-1 (379 aa).

The segment at residues 60 to 117 (KARKALNAFVGFRCYYITIPMFKPWPMKKLSNLIGLLWEADPNKSLWSLMAKAWSTIR) is a DNA-binding region (alpha box).

Belongs to the MATALPHA1 family.

It localises to the nucleus. Mating type proteins are sequence specific DNA-binding proteins that act as master switches in fungal differentiation by controlling gene expression in a cell type-specific fashion. Transcriptional activator that induces the transcription of alpha-specific genes. The sequence is that of Mating-type protein MAT-1 (MAT1) from Cochliobolus carbonum (strain 26-R-13) (Maize leaf spot fungus).